The sequence spans 152 residues: Ribosome maturation factor RimP (152 aa).

Belongs to the RimP family.

Its subcellular location is the cytoplasm. Required for maturation of 30S ribosomal subunits. This is Ribosome maturation factor RimP from Burkholderia ambifaria (strain MC40-6).